Here is a 381-residue protein sequence, read N- to C-terminus: Chaperone protein DnaJ (381 aa).

Positions 5–70 (DYYEVLGCDR…QKRGAYDRYG (66 aa)) constitute a J domain. Residues 136–214 (GKTAQISIPT…CGGAGRVTRE (79 aa)) form a CR-type zinc finger. Zn(2+) is bound by residues Cys149, Cys152, Cys166, Cys169, Cys188, Cys191, Cys202, and Cys205. CXXCXGXG motif repeat units lie at residues 149–156 (CEVCSGSG), 166–173 (CRTCNGAG), 188–195 (CPSCQGRG), and 202–209 (CPNCGGAG).

This sequence belongs to the DnaJ family. In terms of assembly, homodimer. Requires Zn(2+) as cofactor.

It is found in the cytoplasm. Functionally, participates actively in the response to hyperosmotic and heat shock by preventing the aggregation of stress-denatured proteins and by disaggregating proteins, also in an autonomous, DnaK-independent fashion. Unfolded proteins bind initially to DnaJ; upon interaction with the DnaJ-bound protein, DnaK hydrolyzes its bound ATP, resulting in the formation of a stable complex. GrpE releases ADP from DnaK; ATP binding to DnaK triggers the release of the substrate protein, thus completing the reaction cycle. Several rounds of ATP-dependent interactions between DnaJ, DnaK and GrpE are required for fully efficient folding. Also involved, together with DnaK and GrpE, in the DNA replication of plasmids through activation of initiation proteins. This is Chaperone protein DnaJ from Azorhizobium caulinodans (strain ATCC 43989 / DSM 5975 / JCM 20966 / LMG 6465 / NBRC 14845 / NCIMB 13405 / ORS 571).